The following is a 476-amino-acid chain: MAHEPDSQTVRLWGGRFSGGPSEALARLSQSTHFDWRLARYDIAGSRAHARVLHAAGLLDDAELAQMLRGLDQLEADVASGAFTPSPDDEDVHTALERGFIERVGPELGGRLRAGRSRNDQIATLVRMYLREEARAITALLLDLVAALADQAEANLDVPMPGRTHLQHAQPVLLAHHLMAHAWPLIRDIERLRDWDRRADMSAYGSGALAGSSLGLDPEAVAAELGFSRSVPNSIDGTAARDVVAEFAFVAAMIGVDLSRISEEIILWATKEFSFITLDDAFSTGSSIMPQKKNPDIAELARGKAGRLIGDLAGLLSTLKGLPLAYNRDLQEDKEPVFDAVDTLKVLLPAFTGMVATLTVNRERMAELAPQGFSLATDIAEWLVRQRVPFREAHEIAGACVRVCEERGIDLPDLSDADLAAISPHLTPQVREVLTVQGSLESRAARGGTAPARVREQLAELRKAIDDHRAFTQSHA.

It belongs to the lyase 1 family. Argininosuccinate lyase subfamily.

The protein resides in the cytoplasm. It catalyses the reaction 2-(N(omega)-L-arginino)succinate = fumarate + L-arginine. It participates in amino-acid biosynthesis; L-arginine biosynthesis; L-arginine from L-ornithine and carbamoyl phosphate: step 3/3. In Thermobifida fusca (strain YX), this protein is Argininosuccinate lyase.